We begin with the raw amino-acid sequence, 340 residues long: Annexin A2-A (340 aa).

The segment at 2–25 is P10 binding site; it reads ALIHEILGKLSLEGNQSCARQSAL. Annexin repeat units follow at residues 34–105, 106–177, 190–262, and 266–337; these read FDAE…GLIK, TRPQ…ALAK, EKID…NLVQ, and NKPL…NLCG.

It belongs to the annexin family. As to quaternary structure, tetramer of 2 light chains (p10 proteins) and 2 heavy chains (p36 proteins).

It is found in the secreted. The protein resides in the extracellular space. The protein localises to the extracellular matrix. Its subcellular location is the basement membrane. Functionally, calcium-regulated membrane-binding protein whose affinity for calcium is greatly enhanced by anionic phospholipids. It binds two calcium ions with high affinity. This Xenopus laevis (African clawed frog) protein is Annexin A2-A (anxa2-a).